The sequence spans 359 residues: 3-dehydroquinate synthase (359 aa).

Residues 69–74 (DAEDGK), 103–107 (GAVTD), 127–128 (TT), Lys-140, and Lys-149 contribute to the NAD(+) site. Zn(2+) is bound by residues Glu-182, His-244, and His-260.

The protein belongs to the sugar phosphate cyclases superfamily. Dehydroquinate synthase family. NAD(+) is required as a cofactor. Requires Co(2+) as cofactor. The cofactor is Zn(2+).

The protein resides in the cytoplasm. It catalyses the reaction 7-phospho-2-dehydro-3-deoxy-D-arabino-heptonate = 3-dehydroquinate + phosphate. It participates in metabolic intermediate biosynthesis; chorismate biosynthesis; chorismate from D-erythrose 4-phosphate and phosphoenolpyruvate: step 2/7. Catalyzes the conversion of 3-deoxy-D-arabino-heptulosonate 7-phosphate (DAHP) to dehydroquinate (DHQ). The protein is 3-dehydroquinate synthase of Corynebacterium pseudotuberculosis (strain C231).